Consider the following 548-residue polypeptide: BTB/POZ domain-containing protein At5g17580 (548 aa).

Residues 7–74 form the BTB domain; that stretch reads SDLHINVKGV…CNGSEFKFTS (68 aa). Residues 180–442 form the NPH3 domain; the sequence is DWKSEDLITI…VNVLCVSQLQ (263 aa). Y383 carries the post-translational modification Phosphotyrosine. The stretch at 442–493 forms a coiled coil; sequence QIRDTVAKEIKGMEEKVDEEEEEEIEVSSDEDEMEKMSNKLLGLEIENDECV.

Belongs to the NPH3 family.

It participates in protein modification; protein ubiquitination. Functionally, may act as a substrate-specific adapter of an E3 ubiquitin-protein ligase complex (CUL3-RBX1-BTB) which mediates the ubiquitination and subsequent proteasomal degradation of target proteins. This is BTB/POZ domain-containing protein At5g17580 from Arabidopsis thaliana (Mouse-ear cress).